We begin with the raw amino-acid sequence, 95 residues long: Aspartyl/glutamyl-tRNA(Asn/Gln) amidotransferase subunit C (95 aa).

The protein belongs to the GatC family. Heterotrimer of A, B and C subunits.

The catalysed reaction is L-glutamyl-tRNA(Gln) + L-glutamine + ATP + H2O = L-glutaminyl-tRNA(Gln) + L-glutamate + ADP + phosphate + H(+). It carries out the reaction L-aspartyl-tRNA(Asn) + L-glutamine + ATP + H2O = L-asparaginyl-tRNA(Asn) + L-glutamate + ADP + phosphate + 2 H(+). In terms of biological role, allows the formation of correctly charged Asn-tRNA(Asn) or Gln-tRNA(Gln) through the transamidation of misacylated Asp-tRNA(Asn) or Glu-tRNA(Gln) in organisms which lack either or both of asparaginyl-tRNA or glutaminyl-tRNA synthetases. The reaction takes place in the presence of glutamine and ATP through an activated phospho-Asp-tRNA(Asn) or phospho-Glu-tRNA(Gln). The sequence is that of Aspartyl/glutamyl-tRNA(Asn/Gln) amidotransferase subunit C from Gluconacetobacter diazotrophicus (strain ATCC 49037 / DSM 5601 / CCUG 37298 / CIP 103539 / LMG 7603 / PAl5).